We begin with the raw amino-acid sequence, 326 residues long: tRNA N6-adenosine threonylcarbamoyltransferase (326 aa).

Fe cation-binding residues include His-113 and His-117. Substrate is bound by residues 134–138 (VASGG), Asp-167, Gly-180, and Asn-267. Asp-291 contacts Fe cation.

It belongs to the KAE1 / TsaD family. Requires Fe(2+) as cofactor.

Its subcellular location is the cytoplasm. It carries out the reaction L-threonylcarbamoyladenylate + adenosine(37) in tRNA = N(6)-L-threonylcarbamoyladenosine(37) in tRNA + AMP + H(+). Its function is as follows. Required for the formation of a threonylcarbamoyl group on adenosine at position 37 (t(6)A37) in tRNAs that read codons beginning with adenine. Is involved in the transfer of the threonylcarbamoyl moiety of threonylcarbamoyl-AMP (TC-AMP) to the N6 group of A37, together with TsaE and TsaB. TsaD likely plays a direct catalytic role in this reaction. The polypeptide is tRNA N6-adenosine threonylcarbamoyltransferase (Thermus thermophilus (strain ATCC 27634 / DSM 579 / HB8)).